The chain runs to 20 residues: KCGVSIPYKISPSTDCSSVK.

This sequence belongs to the plant LTP family. In terms of tissue distribution, leaf.

Plant non-specific lipid-transfer proteins transfer phospholipids as well as galactolipids across membranes. May play a role in wax or cutin deposition in the cell walls of expanding epidermal cells and certain secretory tissues. The sequence is that of Non-specific lipid-transfer protein from Cannabis sativa (Hemp).